Consider the following 585-residue polypeptide: Testis-specific serine kinase substrate (585 aa).

A compositionally biased stretch (low complexity) spans 91-108; sequence EPDSSGTDSTTEDSGPLA. Residues 91-125 are disordered; it reads EPDSSGTDSTTEDSGPLALPGPPASPTTPWAPEDP. Serine 224 carries the phosphoserine modification. 2 disordered regions span residues 264-312 and 559-585; these read HGLS…SEQE and LEGS…GSEQ. Residue serine 281 is modified to Phosphoserine; by TSSK1 and TSSK2. Serine 309 bears the Phosphoserine mark.

Post-translationally, phosphorylated on serine residue(s) by STK22A/TSSK1 and STK22B/TSSK2. In terms of tissue distribution, testis specific.

Its subcellular location is the cytoplasm. It is found in the cytoskeleton. It localises to the microtubule organizing center. The protein resides in the centrosome. The protein localises to the centriole. Its subcellular location is the cytoplasmic vesicle. It is found in the secretory vesicle. It localises to the acrosome. Functionally, may play a role in testicular physiology, most probably in the process of spermatogenesis or spermatid development. This is Testis-specific serine kinase substrate (Tsks) from Mus musculus (Mouse).